Here is a 348-residue protein sequence, read N- to C-terminus: L-threonine 3-dehydrogenase (348 aa).

Position 42 (Cys42) interacts with Zn(2+). Residues Thr44 and His47 each act as charge relay system in the active site. Residues His67, Glu68, Cys97, Cys100, Cys103, and Cys111 each contribute to the Zn(2+) site. Residues Leu179, Glu199, Arg204, 266-268 (LGL), and 291-292 (IT) contribute to the NAD(+) site.

This sequence belongs to the zinc-containing alcohol dehydrogenase family. Homotetramer. It depends on Zn(2+) as a cofactor.

It is found in the cytoplasm. The catalysed reaction is L-threonine + NAD(+) = (2S)-2-amino-3-oxobutanoate + NADH + H(+). It functions in the pathway amino-acid degradation; L-threonine degradation via oxydo-reductase pathway; glycine from L-threonine: step 1/2. Functionally, catalyzes the NAD(+)-dependent oxidation of L-threonine to 2-amino-3-ketobutyrate. The polypeptide is L-threonine 3-dehydrogenase (Pyrococcus abyssi (strain GE5 / Orsay)).